Here is a 187-residue protein sequence, read N- to C-terminus: Corticoliberin (187 aa).

The signal sequence occupies residues 1–19 (MRLRLLVSAGMLLVALSSC). Positions 20–144 (LPCRALLSRG…HQGALERERR (125 aa)) are excised as a propeptide. 2 disordered regions span residues 75-94 (AARL…SRPS) and 114-146 (QRSL…RRSE). A compositionally biased stretch (basic and acidic residues) spans 117–129 (LDSRAEPAERGAE). Isoleucine amide is present on isoleucine 185.

This sequence belongs to the sauvagine/corticotropin-releasing factor/urotensin I family. Interacts (via C-terminus) with CRFR1 (via N-terminal extracellular domain). Expressed in parvocellular paraventricular nucleus of the hypothalamus and in medial accessory olivary nucleus.

It localises to the secreted. Functionally, hormone regulating the release of corticotropin from pituitary gland. Induces NLRP6 in intestinal epithelial cells, hence may influence gut microbiota profile. This chain is Corticoliberin (Crh), found in Mus musculus (Mouse).